The following is a 423-amino-acid chain: COP9 signalosome complex subunit 3 (423 aa).

An N-acetylalanine modification is found at Ala2. The 169-residue stretch at 197–365 folds into the PCI domain; the sequence is NFERALYFYE…GMVSFHDNPE (169 aa). Residues 402–423 are disordered; that stretch reads QFVQKSMGSQEDDSGNKPSSYS. Phosphoserine occurs at positions 407, 410, and 423.

This sequence belongs to the CSN3 family. Component of the CSN complex, composed of COPS1/GPS1, COPS2, COPS3, COPS4, COPS5, COPS6, COPS7 (COPS7A or COPS7B), COPS8 and COPS9. In the complex, it probably interacts directly with COPS1, COPS4, COPS8 and COPS9. Interacts with CK2 and PKD. Interacts with the translation initiation factor EIF3S6 and IKBKG. Interacts with ERCC6. In terms of tissue distribution, widely expressed.

The protein resides in the cytoplasm. The protein localises to the nucleus. Functionally, component of the COP9 signalosome complex (CSN), a complex involved in various cellular and developmental processes. The CSN complex is an essential regulator of the ubiquitin (Ubl) conjugation pathway by mediating the deneddylation of the cullin subunits of SCF-type E3 ligase complexes, leading to decrease the Ubl ligase activity of SCF-type complexes such as SCF, CSA or DDB2. The complex is also involved in phosphorylation of p53/TP53, c-jun/JUN, IkappaBalpha/NFKBIA, ITPK1 and IRF8/ICSBP, possibly via its association with CK2 and PKD kinases. CSN-dependent phosphorylation of TP53 and JUN promotes and protects degradation by the Ubl system, respectively. Essential to maintain the survival of epiblast cells and thus the development of the postimplantation embryo. The protein is COP9 signalosome complex subunit 3 (Cops3) of Mus musculus (Mouse).